The primary structure comprises 130 residues: Small ribosomal subunit protein uS8 (130 aa).

This sequence belongs to the universal ribosomal protein uS8 family. Part of the 30S ribosomal subunit.

In terms of biological role, one of the primary rRNA binding proteins, it binds directly to 16S rRNA central domain where it helps coordinate assembly of the platform of the 30S subunit. The protein is Small ribosomal subunit protein uS8 of Methanococcus maripaludis (strain C6 / ATCC BAA-1332).